The sequence spans 596 residues: Malto-oligosyltrehalose trehalohydrolase (596 aa).

263–268 contributes to the substrate binding site; that stretch reads RLDAVH. Asp-265 functions as the Nucleophile in the catalytic mechanism. Glu-302 serves as the catalytic Proton donor. Residues 327-331 and 397-402 contribute to the substrate site; these read DDFHH and HDQIGN.

The protein belongs to the glycosyl hydrolase 13 family.

It is found in the cytoplasm. It catalyses the reaction hydrolysis of (1-&gt;4)-alpha-D-glucosidic linkage in 4-alpha-D-[(1-&gt;4)-alpha-D-glucanosyl]n trehalose to yield trehalose and (1-&gt;4)-alpha-D-glucan.. It participates in glycan biosynthesis; trehalose biosynthesis. The polypeptide is Malto-oligosyltrehalose trehalohydrolase (treZ) (Rhizobium sp. (strain M-11)).